The primary structure comprises 536 residues: MDKNLNLWDMSTFIQQYGALTADHPTHTPEDSPQTVPSPRSSSAHSPEIQELRSLQETRPARLGARSQSRSSKHGLQQCSSSPSDESFRLHAELAAWCERVETKPSLLAKLGCCAAPPVVGDHREQRREAMERIMRCLDAGQAGTQLTLRDLNLSQLPPGLHRLAHLRDLDVADNVNLTRLPEDLSLCKHLERINADGCSIAALPSKIGALKNLSEISLAFNELRTLPDSIGQCSSLTTIVVPGCKINKLPASLANLTQLKKLDVAANIELSELSPHMNLDDVAVHSTQTRLGLMHRIFKAPTFDPETRQRLSYQASALRDRWAALSHHLSPQARARVDQMREGASTTLSSQDHKASTAWKTATEKVSSWAEEGAPITLDRIFKLNQLLLPEGDDDNDPIGGQLRKVGIQAAPSNTWTECRYPPPETLKDEMAKFSGWLEHSEQQAHARDALGHIEFAAQLHQRLVSLHPFDDANGRTARLAMDWALQRHGLPPAPPVGEASRLPASFLGGKRVSPEKVVLETLEGIATVMNQVHQ.

Positions 22–84 (ADHPTHTPED…GLQQCSSSPS (63 aa)) are disordered. A compositionally biased stretch (polar residues) spans 31 to 45 (DSPQTVPSPRSSSAH). Positions 48-60 (EIQELRSLQETRP) are enriched in basic and acidic residues. A compositionally biased stretch (polar residues) spans 66–84 (RSQSRSSKHGLQQCSSSPS). LRR repeat units follow at residues 140-164 (AGQAGTQLTLRDLNLSQLPPGLHRL), 165-189 (AHLRDLDVADNVNLTRLPEDLSLCK), 191-211 (LERINADGCSIAALPSKIGAL), 212-234 (KNLSEISLAFNELRTLPDSIGQC), 236-257 (SLTTIVVPGCKINKLPASLANL), and 258-282 (TQLKKLDVAANIELSELSPHMNLDD). A Fido domain is found at 377 to 533 (ITLDRIFKLN…LEGIATVMNQ (157 aa)).

The protein in the C-terminal section; belongs to the fic family. As to quaternary structure, interacts with several members of the Arabidopsis RLCK VIIa subfamily.

Its subcellular location is the secreted. It localises to the host cell. It is found in the host cell membrane. It catalyses the reaction L-seryl-[protein] + UTP = O-(5'-uridylyl)-L-seryl-[protein] + diphosphate. The enzyme catalyses L-threonyl-[protein] + UTP = uridylyl-L-threonyl-[protein] + diphosphate. Functionally, functions both as a virulence and an avirulence gene in Arabidopsis. Causes disease on the Kashmir (Kas) ecotype, but not on Columbia (Col-0) ecotype. Acts by directly uridylylating the conserved phosphorylation sites in the activation loop of a number of host receptor-like cytoplasmic protein kinases (RLCK), including BIK1, RIPK, PBL1 and PBL2, preventing the activation of these kinases and subsequent signal transduction. In susceptible Arabidopsis plants, uridylylation of BIK1 inhibits the PAMP-triggered immunity (PTI) signaling cascade and thereby promotes bacterial virulence. It also inhibits RPM1-dependent effector-triggered immunity (ETI) in mesophyll tissues by targeting RIPK. In contrast, in the resistant ecotype Col-0, xopAC is a major avirulence gene. Uridylylation of PBL2 triggers the PBL2-RKS1 interaction and thus the assembly of the PBL2-RKS1-ZAR1 complex, which, in turn, activates effector-triggered immunity (ETI) against X.campestris. The protein is Uridine 5'-monophosphate transferase of Xanthomonas campestris pv. campestris (strain 8004).